Consider the following 517-residue polypeptide: Bifunctional purine biosynthesis protein PurH (517 aa).

In terms of domain architecture, MGS-like spans 1-145 (MSPLALVSVS…KNHKDVSVLV (145 aa)).

It belongs to the PurH family.

It carries out the reaction (6R)-10-formyltetrahydrofolate + 5-amino-1-(5-phospho-beta-D-ribosyl)imidazole-4-carboxamide = 5-formamido-1-(5-phospho-D-ribosyl)imidazole-4-carboxamide + (6S)-5,6,7,8-tetrahydrofolate. The enzyme catalyses IMP + H2O = 5-formamido-1-(5-phospho-D-ribosyl)imidazole-4-carboxamide. It functions in the pathway purine metabolism; IMP biosynthesis via de novo pathway; 5-formamido-1-(5-phospho-D-ribosyl)imidazole-4-carboxamide from 5-amino-1-(5-phospho-D-ribosyl)imidazole-4-carboxamide (10-formyl THF route): step 1/1. The protein operates within purine metabolism; IMP biosynthesis via de novo pathway; IMP from 5-formamido-1-(5-phospho-D-ribosyl)imidazole-4-carboxamide: step 1/1. The protein is Bifunctional purine biosynthesis protein PurH of Prochlorococcus marinus subsp. pastoris (strain CCMP1986 / NIES-2087 / MED4).